A 500-amino-acid chain; its full sequence is Endothelial lipase (500 aa).

The signal sequence occupies residues 1–20 (MRNTVFLLGFWSVYCYFPAG). C64 and C77 are joined by a disulfide. N-linked (GlcNAc...) asparagine glycosylation is found at N65, N80, and N136. S169 serves as the catalytic Nucleophile. D193 (charge relay system) is an active-site residue. A disulfide bridge links C252 with C272. The Charge relay system role is filled by H274. 2 cysteine pairs are disulfide-bonded: C297-C316 and C308-C311. 325–337 (KMRKKRNSKMYLK) provides a ligand contact to heparin. One can recognise a PLAT domain in the interval 347 to 482 (YHYQLKVHMF…SPGQELWFHK (136 aa)). N-linked (GlcNAc...) asparagine glycosylation is found at N359 and N393. Cysteines 463 and 483 form a disulfide. Residue N491 is glycosylated (N-linked (GlcNAc...) asparagine).

It belongs to the AB hydrolase superfamily. Lipase family. As to quaternary structure, head to tail homodimer. Expressed in placenta, lung, liver, testis and spleen.

It localises to the secreted. The catalysed reaction is a triacylglycerol + H2O = a diacylglycerol + a fatty acid + H(+). It catalyses the reaction a 1,2-diacyl-sn-glycero-3-phosphocholine + H2O = a 2-acyl-sn-glycero-3-phosphocholine + a fatty acid + H(+). The enzyme catalyses 1,2,3-tri-(9Z-octadecenoyl)-glycerol + H2O = di-(9Z)-octadecenoylglycerol + (9Z)-octadecenoate + H(+). It carries out the reaction 1,2,3-tributanoylglycerol + H2O = dibutanoylglycerol + butanoate + H(+). The catalysed reaction is 1,2-dihexadecanoyl-sn-glycero-3-phosphocholine + H2O = hexadecanoyl-sn-glycero-3-phosphocholine + hexadecanoate + H(+). Functionally, exerts both phospholipase and triglyceride lipase activities. More active as a phospholipase than a triglyceride lipase. Hydrolyzes triglycerides, both with short-chain fatty acyl groups (tributyrin) and long-chain fatty acyl groups (triolein) with similar levels of activity toward both types of substrates. Hydrolyzes high density lipoproteins (HDL) more efficiently than other lipoproteins. This chain is Endothelial lipase (Lipg), found in Mus musculus (Mouse).